The sequence spans 364 residues: Aminomethyltransferase (364 aa).

The protein belongs to the GcvT family. As to quaternary structure, the glycine cleavage system is composed of four proteins: P, T, L and H.

It carries out the reaction N(6)-[(R)-S(8)-aminomethyldihydrolipoyl]-L-lysyl-[protein] + (6S)-5,6,7,8-tetrahydrofolate = N(6)-[(R)-dihydrolipoyl]-L-lysyl-[protein] + (6R)-5,10-methylene-5,6,7,8-tetrahydrofolate + NH4(+). Functionally, the glycine cleavage system catalyzes the degradation of glycine. In Shewanella oneidensis (strain ATCC 700550 / JCM 31522 / CIP 106686 / LMG 19005 / NCIMB 14063 / MR-1), this protein is Aminomethyltransferase.